Consider the following 237-residue polypeptide: Phosphoribosylaminoimidazole-succinocarboxamide synthase (237 aa).

It belongs to the SAICAR synthetase family.

It catalyses the reaction 5-amino-1-(5-phospho-D-ribosyl)imidazole-4-carboxylate + L-aspartate + ATP = (2S)-2-[5-amino-1-(5-phospho-beta-D-ribosyl)imidazole-4-carboxamido]succinate + ADP + phosphate + 2 H(+). It participates in purine metabolism; IMP biosynthesis via de novo pathway; 5-amino-1-(5-phospho-D-ribosyl)imidazole-4-carboxamide from 5-amino-1-(5-phospho-D-ribosyl)imidazole-4-carboxylate: step 1/2. The chain is Phosphoribosylaminoimidazole-succinocarboxamide synthase from Erwinia tasmaniensis (strain DSM 17950 / CFBP 7177 / CIP 109463 / NCPPB 4357 / Et1/99).